A 310-amino-acid polypeptide reads, in one-letter code: MANPWWVGNVAIGGVESPVTSSAPSLHHRNSNNNNPPTMTRSDPRLDHDFTTNNSGSPNTQTQSQEEQNSRDEQPAVEPGSGSGSTGRRPRGRPPGSKNKPKSPVVVTKESPNSLQSHVLEIATGADVAESLNAFARRRGRGVSVLSGSGLVTNVTLRQPAASGGVVSLRGQFEILSMCGAFLPTSGSPAAAAGLTIYLAGAQGQVVGGGVAGPLIASGPVIVIAATFCNATYERLPIEEEQQQEQPLQLEDGKKQKEENDDNESGNNGNEGSMQPPMYNMPPNFIPNGHQMAQHDVYWGGPPPRAPPSY.

Disordered stretches follow at residues 15-112 (VESP…KESP) and 239-310 (EEEQ…PPSY). Composition is skewed to polar residues over residues 31 to 41 (SNNNNPPTMTR) and 51 to 67 (TTNN…SQEE). The a.T hook DNA-binding region spans 88 to 100 (RRPRGRPPGSKNK). Residues 94–104 (PPGSKNKPKSP) show a composition bias toward low complexity. The region spanning 112 to 251 (PNSLQSHVLE…QQQEQPLQLE (140 aa)) is the PPC domain. A compositionally biased stretch (pro residues) spans 301 to 310 (GPPPRAPPSY).

It localises to the nucleus. Functionally, transcription factor that specifically binds AT-rich DNA sequences related to the nuclear matrix attachment regions (MARs). Binds the DNA sequence GNFEI (GA-negative feedback element I) in the GA3OX1 promoter. Negatively regulates plant innate immunity (PTI) to pathogens through the down-regulation of the PAMP-triggered FRK1 expression. The chain is AT-hook motif nuclear-localized protein 15 from Arabidopsis thaliana (Mouse-ear cress).